We begin with the raw amino-acid sequence, 380 residues long: Probable cytosolic iron-sulfur protein assembly protein 1 (380 aa).

7 WD repeats span residues 10-49 (AHND…KFPL), 56-108 (THKR…VEYD), 135-175 (GHEN…EEFE), 182-221 (DHSQ…DEWS), 228-275 (GHEG…EEDK), 299-338 (VHKY…KWVI), and 346-380 (HGVH…LWNV).

This sequence belongs to the WD repeat CIA1 family. In terms of assembly, interacts with NAR1.

The protein localises to the cytoplasm. Its subcellular location is the nucleus. Functionally, essential component of the cytosolic iron-sulfur (Fe/S) protein assembly machinery. Required for the maturation of extramitochondrial Fe/S proteins. The sequence is that of Probable cytosolic iron-sulfur protein assembly protein 1 from Candida dubliniensis (strain CD36 / ATCC MYA-646 / CBS 7987 / NCPF 3949 / NRRL Y-17841) (Yeast).